A 623-amino-acid polypeptide reads, in one-letter code: Quinoprotein ethanol dehydrogenase (623 aa).

Positions 1–34 are cleaved as a signal peptide; that stretch reads MTTRTSPAPAGLLRPSLHCLAFAVALGSAGAALA. The Ca(2+) site is built by aspartate 45, threonine 48, and aspartate 51. Residue glutamate 95 coordinates pyrroloquinoline quinone. Cysteine 139 and cysteine 140 are disulfide-bonded. Pyrroloquinoline quinone is bound by residues arginine 145, threonine 189, and 207-209; that span reads HGS. Position 213 (glutamate 213) interacts with Ca(2+). The segment at 244-281 is disordered; sequence LNGKDSTVTGDVKAPSWPDDRNSPTGKVESWSHGGGAP. Residues asparagine 300 and aspartate 350 each coordinate Ca(2+). Aspartate 350 (proton acceptor) is an active-site residue. Residue arginine 378 participates in pyrroloquinoline quinone binding. Residues 413–434 form a disordered region; it reads GRPVEREGQRPPLPEPGQKHGK. Pyrroloquinoline quinone contacts are provided by tryptophan 523 and alanine 587.

The protein belongs to the bacterial PQQ dehydrogenase family. Homodimer. Interacts with cytochrome c550. Pyrroloquinoline quinone serves as cofactor. It depends on Ca(2+) as a cofactor. In terms of processing, the disulfide ring formed between the two adjacent cysteine residues Cys-139 and Cys-140 is essential for efficient electron transfer at pH 7 from QEDH to its natural electron acceptor cytochrome c550.

The protein localises to the periplasm. The enzyme catalyses a primary alcohol + 2 Fe(III)-[cytochrome c] = an aldehyde + 2 Fe(II)-[cytochrome c] + 2 H(+). It catalyses the reaction ethanol + 2 Fe(III)-[cytochrome c] = acetaldehyde + 2 Fe(II)-[cytochrome c] + 2 H(+). It carries out the reaction butan-1-ol + 2 Fe(III)-[cytochrome c] = butanal + 2 Fe(II)-[cytochrome c] + 2 H(+). The catalysed reaction is propan-2-ol + 2 Fe(III)-[cytochrome c] = acetone + 2 Fe(II)-[cytochrome c] + 2 H(+). The enzyme catalyses 1-propanol + 2 Fe(III)-[cytochrome c] = propanal + 2 Fe(II)-[cytochrome c] + 2 H(+). The protein operates within alcohol metabolism; ethanol degradation; acetate from ethanol: step 1/2. Its activity is regulated as follows. Inhibited by cyclopropanone ethylhemiketal. Activated by ammonia (500mM), methylamine (5mM), ethylamine (5mM), octylamine (5mM), ethanolamine (5mM) and 1-amino-2-propanol (5mM), in assays using artificial electron acceptors. Ammonia is not needed for, nor does it stimulate, the ethanol-oxidizing activity when using the natural electron acceptor cytochrome c550. In terms of biological role, catalyzes the oxidation of ethanol and other primary alcohols to the corresponding aldehydes, except methanol, which is a very poor substrate. Uses a specific inducible cytochrome c550, encoded by the adjacent gene in the locus, as electron acceptor. Is a key enzyme of the carbon and energy metabolism during growth of P.aeruginosa on ethanol as the sole carbon and energy source. Is also able to use secondary alcohols as well as aminoalcohols like ethanolamine and 1-amino-2-propanol, and aldehydes as substrates. This chain is Quinoprotein ethanol dehydrogenase, found in Pseudomonas aeruginosa (strain ATCC 15692 / DSM 22644 / CIP 104116 / JCM 14847 / LMG 12228 / 1C / PRS 101 / PAO1).